Reading from the N-terminus, the 543-residue chain is Heparanase (543 aa).

Positions 1-35 are cleaved as a signal peptide; the sequence is MLLRSKPALPPPLMLLLLGPLGPLSPGALPRPAQA. Residues 62–64 and Thr-97 each bind heparan sulfate group; that span reads DAN. The propeptide at 110–157 is linker peptide; sequence STFEERSYWQSQVNQDICKYGSIPPDVEEKLRLEWPYQEQLLLREHYQ. Cys-127 and Cys-179 are disulfide-bonded. A heparan sulfate group-binding site is contributed by 158-162; that stretch reads KKFKN. Asn-162, Asn-178, Asn-200, and Asn-217 each carry an N-linked (GlcNAc...) asparagine glycan. The Proton donor role is filled by Glu-225. Asn-238 carries N-linked (GlcNAc...) asparagine glycosylation. Heparan sulfate group is bound by residues 270–280, His-296, and Arg-303; that span reads QPRRKTAKMLK. Positions 288 to 417 are required for heterodimerization with the heparanase 8 kDa subunit; that stretch reads EVIDSVTWHH…LLFKKLVGTK (130 aa). Glu-343 (nucleophile) is an active-site residue. Residues 348 to 350 and 389 to 391 each bind heparan sulfate group; these read YGG and GNY. Cys-437 and Cys-542 are oxidised to a cystine. N-linked (GlcNAc...) asparagine glycosylation occurs at Asn-459. The required for transferring proheparanase to the Golgi apparatus, secretion and subsequent enzyme activity and for enhancement of PKB/AKT1 phosphorylation stretch occupies residues 527 to 543; it reads FSYSFFVIRNAKVAACI.

Belongs to the glycosyl hydrolase 79 family. In terms of assembly, heterodimer; heterodimer formation between the 8 kDa and the 50 kDa subunits is required for enzyme activity. Interacts with TF; the interaction, inhibited by heparin, enhances the generation of activated factor X and activates coagulation. Interacts with HRG; the interaction is enhanced at acidic pH, partially inhibits binding of HPSE to cell surface receptors and modulates its enzymatic activity. Interacts with SDC1; the interaction enhances the shedding of SDC1. Interacts with HPSE2. Proteolytically processed. The cleavage of the 65 kDa form leads to the generation of a linker peptide, and 8 kDa and 50 kDa products. The active form, the 8/50 kDa heterodimer, is resistant to degradation. Complete removal of the linker peptide appears to be a prerequisite to the complete activation of the enzyme. Post-translationally, N-glycosylated. Glycosylation of the 50 kDa subunit appears to be essential for its solubility. In terms of tissue distribution, highly expressed in placenta and spleen and weakly expressed in lymph node, thymus, peripheral blood leukocytes, bone marrow, endothelial cells, fetal liver and tumor tissues. Also expressed in hair follicles, specifically in both Henle's and Huxley's layers of inner the root sheath (IRS) at anagen phase.

It localises to the lysosome membrane. The protein localises to the secreted. Its subcellular location is the nucleus. It carries out the reaction endohydrolysis of (1-&gt;4)-beta-D-glycosidic bonds of heparan sulfate chains in heparan sulfate proteoglycan.. Inhibited by EDTA, laminarin sulfate and, to a lower extent, by heparin and sulfamin and activated by calcium and magnesium. Endoglycosidase that cleaves heparan sulfate proteoglycans (HSPGs) into heparan sulfate side chains and core proteoglycans. Participates in extracellular matrix (ECM) degradation and remodeling. Selectively cleaves the linkage between a glucuronic acid unit and an N-sulfo glucosamine unit carrying either a 3-O-sulfo or a 6-O-sulfo group. Can also cleave the linkage between a glucuronic acid unit and an N-sulfo glucosamine unit carrying a 2-O-sulfo group, but not linkages between a glucuronic acid unit and a 2-O-sulfated iduronic acid moiety. It is essentially inactive at neutral pH but becomes active under acidic conditions such as during tumor invasion and in inflammatory processes. Facilitates cell migration associated with metastasis, wound healing and inflammation. Enhances shedding of syndecans, and increases endothelial invasion and angiogenesis in myelomas. Acts as a procoagulant by increasing the generation of activation factor X in the presence of tissue factor and activation factor VII. Increases cell adhesion to the extracellular matrix (ECM), independent of its enzymatic activity. Induces AKT1/PKB phosphorylation via lipid rafts increasing cell mobility and invasion. Heparin increases this AKT1/PKB activation. Regulates osteogenesis. Enhances angiogenesis through up-regulation of SRC-mediated activation of VEGF. Implicated in hair follicle inner root sheath differentiation and hair homeostasis. This chain is Heparanase (HPSE), found in Homo sapiens (Human).